The primary structure comprises 215 residues: 3-demethoxyubiquinol 3-hydroxylase (215 aa).

Residues E64, E94, H97, E146, E178, and H181 each coordinate Fe cation.

It belongs to the COQ7 family. It depends on Fe cation as a cofactor.

The protein resides in the cell membrane. The catalysed reaction is a 5-methoxy-2-methyl-3-(all-trans-polyprenyl)benzene-1,4-diol + AH2 + O2 = a 3-demethylubiquinol + A + H2O. It functions in the pathway cofactor biosynthesis; ubiquinone biosynthesis. Functionally, catalyzes the hydroxylation of 2-nonaprenyl-3-methyl-6-methoxy-1,4-benzoquinol during ubiquinone biosynthesis. In Pseudomonas fluorescens (strain SBW25), this protein is 3-demethoxyubiquinol 3-hydroxylase.